A 315-amino-acid chain; its full sequence is Solute carrier family 25 member 32 (315 aa).

Solcar repeat units lie at residues 20–109, 118–209, and 222–306; these read HVRY…IKSY, LEAT…LKLK, and LSTV…VSHF. A run of 6 helical transmembrane segments spans residues 26–43, 89–106, 123–143, 186–203, 227–243, and 281–300; these read LIAG…LHPL, IWGA…YNAI, YLVS…PLWV, FVPG…FMAY, YISV…AATY, and GIAP…FVVY.

Belongs to the mitochondrial carrier (TC 2.A.29) family. Ubiquitous.

It localises to the mitochondrion inner membrane. The catalysed reaction is FAD(in) = FAD(out). Its function is as follows. Facilitates flavin adenine dinucleotide (FAD) translocation across the mitochondrial inner membrane into the mitochondrial matrix where it acts as a redox cofactor to assist flavoenzyme activities in fundamental metabolic processes including fatty acid beta-oxidation, amino acid and choline metabolism as well as mitochondrial electron transportation. In particular, provides FAD to DLD dehydrogenase of the glycine cleavage system, part of mitochondrial one-carbon metabolic pathway involved in neural tube closure in early embryogenesis. This Homo sapiens (Human) protein is Solute carrier family 25 member 32.